The following is a 251-amino-acid chain: 1-(5-phosphoribosyl)-5-[(5-phosphoribosylamino)methylideneamino] imidazole-4-carboxamide isomerase (251 aa).

The Proton acceptor role is filled by Asp8. Asp129 serves as the catalytic Proton donor.

Belongs to the HisA/HisF family.

The protein localises to the cytoplasm. It catalyses the reaction 1-(5-phospho-beta-D-ribosyl)-5-[(5-phospho-beta-D-ribosylamino)methylideneamino]imidazole-4-carboxamide = 5-[(5-phospho-1-deoxy-D-ribulos-1-ylimino)methylamino]-1-(5-phospho-beta-D-ribosyl)imidazole-4-carboxamide. It functions in the pathway amino-acid biosynthesis; L-histidine biosynthesis; L-histidine from 5-phospho-alpha-D-ribose 1-diphosphate: step 4/9. This is 1-(5-phosphoribosyl)-5-[(5-phosphoribosylamino)methylideneamino] imidazole-4-carboxamide isomerase from Desulfosudis oleivorans (strain DSM 6200 / JCM 39069 / Hxd3) (Desulfococcus oleovorans).